The primary structure comprises 239 residues: 7-cyano-7-deazaguanine synthase (239 aa).

Position 13 to 23 (13 to 23 (FSGGQDSTTCL)) interacts with ATP. 4 residues coordinate Zn(2+): C201, C216, C219, and C222.

It belongs to the QueC family. Requires Zn(2+) as cofactor.

The enzyme catalyses 7-carboxy-7-deazaguanine + NH4(+) + ATP = 7-cyano-7-deazaguanine + ADP + phosphate + H2O + H(+). It participates in purine metabolism; 7-cyano-7-deazaguanine biosynthesis. Functionally, catalyzes the ATP-dependent conversion of 7-carboxy-7-deazaguanine (CDG) to 7-cyano-7-deazaguanine (preQ(0)). The chain is 7-cyano-7-deazaguanine synthase from Bradyrhizobium sp. (strain BTAi1 / ATCC BAA-1182).